We begin with the raw amino-acid sequence, 2264 residues long: RNA1 polyprotein (2264 aa).

Residues 566 to 1156 lie on the Cytoplasmic side of the membrane; sequence MCTALAAGIF…MGRTYLAENG (591 aa). An SF3 helicase domain is found at 750–916; sequence TEGPNELHKR…PGVLFDPDNP (167 aa). 780-787 lines the ATP pocket; the sequence is GQRHCGKS. Residues 1157–1177 traverse the membrane as a helical segment; it reads CGILMIAAALILILVSAWGFW. At 1178–1203 the chain is on the lumenal side; the sequence is KLFIGLFSGSMSLGAAIVGMSAVDIK. Residues 1227 to 1436 enclose the Peptidase C3 domain; that stretch reads AYAKSQAGDG…WADIMPPNTL (210 aa). Active-site for picornain 3C-like protease activity residues include His1270, Glu1308, and Cys1400. The RdRp catalytic domain maps to 1713 to 1841; that stretch reads NEAINCDYSG…SVSPSIASWF (129 aa).

It belongs to the nepoviruses RNA1 polyprotein family. In terms of processing, specific enzymatic cleavages by picornain 3C-like protease in vivo yield mature proteins. Picornain 3C-like protease is autocatalytically processed. VPg is uridylylated by the polymerase and is covalently linked to the 5'-end of genomic RNA. This uridylylated form acts as a nucleotide-peptide primer for the polymerase.

Its subcellular location is the host endoplasmic reticulum lumen. The protein resides in the host endoplasmic reticulum membrane. It catalyses the reaction RNA(n) + a ribonucleoside 5'-triphosphate = RNA(n+1) + diphosphate. Functionally, picornain 3C-like protease is a thiol protease that cleaves the P1 and P2 polyproteins. This chain is RNA1 polyprotein, found in Beet ringspot virus (BRSV).